The chain runs to 1500 residues: Synaptonemal complex protein 2 (1500 aa).

2 positions are modified to phosphoserine: serine 457 and serine 458. Threonine 464 is modified (phosphothreonine). Residue serine 487 is modified to Phosphoserine. The residue at position 496 (threonine 496) is a Phosphothreonine. 4 positions are modified to phosphoserine: serine 500, serine 509, serine 518, and serine 527. The interval 512-548 (KAVSKTSESGMDYAASPKSRQSDGRKRWNNRANHNKT) is disordered. Residues threonine 608 and threonine 633 each carry the phosphothreonine modification. Residues serine 646, serine 650, and serine 741 each carry the phosphoserine modification. The interval 796–820 (NPSDSMMSTRKLKEPQDGSGFSKKP) is disordered. Serine 914 carries the phosphoserine modification. The residue at position 916 (threonine 916) is a Phosphothreonine. Disordered stretches follow at residues 940–1010 (LMDY…TSES) and 1029–1084 (KEET…SASV). The segment covering 948–958 (NTTKYKSRKSR) has biased composition (basic residues). The segment covering 977–989 (MKNDYEVVVDGRT) has biased composition (basic and acidic residues). The span at 990-1000 (RLPRRATKTKK) shows a compositional bias: basic residues. The span at 1059–1076 (PSEEQKNSSRLREGREDS) shows a compositional bias: basic and acidic residues. Phosphoserine is present on residues serine 1115, serine 1117, serine 1124, serine 1133, serine 1140, serine 1144, serine 1156, serine 1159, and serine 1164. The residue at position 1168 (threonine 1168) is a Phosphothreonine. Phosphoserine is present on residues serine 1183, serine 1213, and serine 1216. Residues 1208–1234 (YMEPESPESCDNHMQNKREGNHAASPL) are disordered. The segment covering 1217 to 1228 (CDNHMQNKREGN) has biased composition (basic and acidic residues). Serine 1232, serine 1275, and serine 1277 each carry phosphoserine. Threonine 1313 carries the post-translational modification Phosphothreonine. A coiled-coil region spans residues 1388 to 1429 (LLDELEKVEKDSQTLRDLEKELVDIEEKLVQKMRAYHRCERE).

The protein belongs to the SYCP2 family. Component of the lateral elements of synaptonemal complexes. Heterodimer with SYCP3. Interacts with SMC1A and SMC3. Interacts with TEX11. In terms of processing, phosphorylated. Detected in testis and spermatocytes (at protein level).

The protein resides in the nucleus. It localises to the chromosome. In terms of biological role, major component of the axial/lateral elements of synaptonemal complexes (SCS) during meiotic prophase. Plays a role in the assembly of synaptonemal complexes. Required for normal meiotic chromosome synapsis during oocyte and spermatocyte development and for normal male and female fertility. Required for insertion of SYCP3 into synaptonemal complexes. May be involved in the organization of chromatin by temporarily binding to DNA scaffold attachment regions. Requires SYCP3, but not SYCP1, in order to be incorporated into the axial/lateral elements. This is Synaptonemal complex protein 2 (Sycp2) from Mus musculus (Mouse).